A 229-amino-acid polypeptide reads, in one-letter code: Ribonuclease HII (229 aa).

The RNase H type-2 domain maps to 34-225 (GPVAGVDEAG…VKAAHDQWLQ (192 aa)). A divalent metal cation-binding residues include aspartate 40, glutamate 41, and aspartate 134.

The protein belongs to the RNase HII family. Mn(2+) is required as a cofactor. The cofactor is Mg(2+).

Its subcellular location is the cytoplasm. It carries out the reaction Endonucleolytic cleavage to 5'-phosphomonoester.. Endonuclease that specifically degrades the RNA of RNA-DNA hybrids. This is Ribonuclease HII from Corynebacterium diphtheriae (strain ATCC 700971 / NCTC 13129 / Biotype gravis).